The following is a 219-amino-acid chain: Putative NAD(P)H nitroreductase SSP0379 (219 aa).

This sequence belongs to the nitroreductase family. FMN serves as cofactor.

This Staphylococcus saprophyticus subsp. saprophyticus (strain ATCC 15305 / DSM 20229 / NCIMB 8711 / NCTC 7292 / S-41) protein is Putative NAD(P)H nitroreductase SSP0379.